The following is a 434-amino-acid chain: Putative magnesium transporter MRS2-D (434 aa).

Disordered regions lie at residues 126-171 (AASP…DGEA) and 279-311 (EASE…AGGG). Basic and acidic residues predominate over residues 279 to 291 (EASELEDHSSRDE). Helical transmembrane passes span 367–387 (GILL…TGVF) and 405–425 (FPCA…AALL).

This sequence belongs to the CorA metal ion transporter (MIT) (TC 1.A.35.5) family.

Its subcellular location is the membrane. In terms of biological role, putative magnesium transporter. This is Putative magnesium transporter MRS2-D (MRS2-D) from Oryza sativa subsp. japonica (Rice).